We begin with the raw amino-acid sequence, 691 residues long: Elongation factor G (691 aa).

The tr-type G domain occupies 8–283; the sequence is EDYRNFGIMA…AVVDYLPSPI (276 aa). Residues 17–24, 81–85, and 135–138 each bind GTP; these read AHIDAGKT, DTPGH, and NKMD.

It belongs to the TRAFAC class translation factor GTPase superfamily. Classic translation factor GTPase family. EF-G/EF-2 subfamily.

It localises to the cytoplasm. Its function is as follows. Catalyzes the GTP-dependent ribosomal translocation step during translation elongation. During this step, the ribosome changes from the pre-translocational (PRE) to the post-translocational (POST) state as the newly formed A-site-bound peptidyl-tRNA and P-site-bound deacylated tRNA move to the P and E sites, respectively. Catalyzes the coordinated movement of the two tRNA molecules, the mRNA and conformational changes in the ribosome. The protein is Elongation factor G of Methylocella silvestris (strain DSM 15510 / CIP 108128 / LMG 27833 / NCIMB 13906 / BL2).